Here is a 585-residue protein sequence, read N- to C-terminus: Arginine--tRNA ligase (585 aa).

The short motif at 131–141 (ANPTGPMHVGH) is the 'HIGH' region element.

It belongs to the class-I aminoacyl-tRNA synthetase family. Monomer.

Its subcellular location is the cytoplasm. It catalyses the reaction tRNA(Arg) + L-arginine + ATP = L-arginyl-tRNA(Arg) + AMP + diphosphate. This chain is Arginine--tRNA ligase, found in Rhizobium etli (strain CIAT 652).